Here is a 205-residue protein sequence, read N- to C-terminus: Proteasome subunit beta (205 aa).

A propeptide spans 1 to 8 (MDDKQYKG) (removed in mature form; by autocatalysis). Threonine 9 functions as the Nucleophile in the catalytic mechanism.

This sequence belongs to the peptidase T1B family. As to quaternary structure, the 20S proteasome core is composed of 14 alpha and 14 beta subunits that assemble into four stacked heptameric rings, resulting in a barrel-shaped structure. The two inner rings, each composed of seven catalytic beta subunits, are sandwiched by two outer rings, each composed of seven alpha subunits. The catalytic chamber with the active sites is on the inside of the barrel. Has a gated structure, the ends of the cylinder being occluded by the N-termini of the alpha-subunits. Is capped at one or both ends by the proteasome regulatory ATPase, PAN.

It localises to the cytoplasm. It carries out the reaction Cleavage of peptide bonds with very broad specificity.. With respect to regulation, the formation of the proteasomal ATPase PAN-20S proteasome complex, via the docking of the C-termini of PAN into the intersubunit pockets in the alpha-rings, triggers opening of the gate for substrate entry. Interconversion between the open-gate and close-gate conformations leads to a dynamic regulation of the 20S proteasome proteolysis activity. Functionally, component of the proteasome core, a large protease complex with broad specificity involved in protein degradation. The protein is Proteasome subunit beta of Methanocella paludicola (strain DSM 17711 / JCM 13418 / NBRC 101707 / SANAE).